A 775-amino-acid chain; its full sequence is Chondroitin sulfate synthase 2 (775 aa).

At 1–15 the chain is on the cytoplasmic side; it reads MRASLLLSVLRPAGP. The chain crosses the membrane as a helical; Signal-anchor for type II membrane protein span at residues 16–34; sequence VAVGISLGFTLSLLSVTWV. The Lumenal portion of the chain corresponds to 35–775; that stretch reads EEPCGPGPPQ…LFEQEQGNST (741 aa). Positions 37–100 are disordered; sequence PCGPGPPQPG…YHPAQPGQAA (64 aa). Over residues 54 to 66 the composition is skewed to polar residues; the sequence is GNTNAARRPNSVQ. 2 N-linked (GlcNAc...) asparagine glycosylation sites follow: Asn138 and Asn361. Residue Asp617 coordinates a divalent metal cation.

Belongs to the chondroitin N-acetylgalactosaminyltransferase family. Interacts with PRKN. The cofactor is Mn(2+). Co(2+) serves as cofactor. In terms of tissue distribution, ubiquitous. Highly expressed in pancreas, ovary, brain, heart, skeletal muscle, colon, kidney, liver, stomach, spleen and placenta. As to expression, expressed in brain, spleen, ovary, testis, lung and peripheral mononuclear cells. Also ubiquitous.

It localises to the golgi apparatus. It is found in the golgi stack membrane. The protein resides in the cytoplasm. The protein localises to the cytosol. Its subcellular location is the mitochondrion. It localises to the mitochondrion matrix. The enzyme catalyses 3-O-(beta-D-GlcA-(1-&gt;3)-beta-D-GalNAc-(1-&gt;4)-beta-D-GlcA-(1-&gt;3)-beta-D-Gal-(1-&gt;3)-beta-D-Gal-(1-&gt;4)-beta-D-Xyl)-L-seryl-[protein] + UDP-N-acetyl-alpha-D-galactosamine = 3-O-(beta-D-GalNAc-(1-&gt;4)-beta-D-GlcA-(1-&gt;3)-beta-D-GalNAc-(1-&gt;4)-beta-D-GlcA-(1-&gt;3)-beta-D-Gal-(1-&gt;3)-beta-D-Gal-(1-&gt;4)-beta-D-Xyl)-L-seryl-[protein] + UDP + H(+). It carries out the reaction 3-O-{beta-D-GlcA-(1-&gt;3)-[beta-D-GalNAc-(1-&gt;4)-beta-D-GlcA-(1-&gt;3)](n)-beta-D-GalNAc-(1-&gt;4)-beta-D-GlcA-(1-&gt;3)-beta-D-Gal-(1-&gt;3)-beta-D-Gal-(1-&gt;4)-beta-D-Xyl}-L-seryl-[protein] + UDP-N-acetyl-alpha-D-galactosamine = 3-O-{[beta-D-GalNAc-(1-&gt;4)-beta-D-GlcA-(1-&gt;3)](n+1)-beta-D-GalNAc-(1-&gt;4)-beta-D-GlcA-(1-&gt;3)-beta-D-Gal-(1-&gt;3)-beta-D-Gal-(1-&gt;4)-beta-D-Xyl}-L-seryl-[protein] + UDP + H(+). It catalyses the reaction 3-O-(beta-D-GalNAc-(1-&gt;4)-beta-D-GlcA-(1-&gt;3)-beta-D-Gal-(1-&gt;3)-beta-D-Gal-(1-&gt;4)-beta-D-Xyl)-L-seryl-[protein] + UDP-alpha-D-glucuronate = 3-O-(beta-D-GlcA-(1-&gt;3)-beta-D-GalNAc-(1-&gt;4)-beta-D-GlcA-(1-&gt;3)-beta-D-Gal-(1-&gt;3)-beta-D-Gal-(1-&gt;4)-beta-D-Xyl)-L-seryl-[protein] + UDP + H(+). The catalysed reaction is 3-O-{[beta-D-GalNAc-(1-&gt;4)-beta-D-GlcA-(1-&gt;3)](n)-beta-D-GalNAc-(1-&gt;4)-beta-D-GlcA-(1-&gt;3)-beta-D-Gal-(1-&gt;3)-beta-D-Gal-(1-&gt;4)-beta-D-Xyl}-L-seryl-[protein] + UDP-alpha-D-glucuronate = 3-O-{beta-D-GlcA-(1-&gt;3)-[beta-D-GalNAc-(1-&gt;4)-beta-D-GlcA-(1-&gt;3)](n)-beta-D-GalNAc-(1-&gt;4)-beta-D-GlcA-(1-&gt;3)-beta-D-Gal-(1-&gt;3)-beta-D-Gal-(1-&gt;4)-beta-D-Xyl}-L-seryl-[protein] + UDP + H(+). In terms of biological role, has both beta-1,3-glucuronic acid and beta-1,4-N-acetylgalactosamine transferase activity. Transfers glucuronic acid (GlcUA) from UDP-GlcUA and N-acetylgalactosamine (GalNAc) from UDP-GalNAc to the non-reducing end of the elongating chondroitin polymer. Seems to act as a specific activating factor for CHSY1 in chondroitin polymerization. Functionally, may facilitate PRKN transport into the mitochondria. In collaboration with PRKN, may enhance cell viability and protect cells from oxidative stress. This Homo sapiens (Human) protein is Chondroitin sulfate synthase 2.